The sequence spans 734 residues: PI-PLC X-box domain-containing protein DDB_G0293730 (734 aa).

The stretch at 8 to 70 forms a coiled coil; the sequence is IKNILLKIEK…ELNEKLIVEK (63 aa). One can recognise a PI-PLC X-box domain in the interval 440–604; it reads KLKDRKVRNL…CIYDDLVNPL (165 aa).

This is PI-PLC X-box domain-containing protein DDB_G0293730 from Dictyostelium discoideum (Social amoeba).